Consider the following 298-residue polypeptide: ADP/ATP translocase 1 (298 aa).

Residues 1–7 (MSDQALS) lie on the Mitochondrial intermembrane side of the membrane. Ser2 carries the post-translational modification N-acetylserine. One copy of the Solcar 1 repeat lies at 6–98 (LSFLKDFLAG…FAFKDKYKQI (93 aa)). At Ser7 the chain carries Phosphoserine. Residues 8–37 (FLKDFLAGGVAAAISKTAVAPIERVKLLLQ) form a helical membrane-spanning segment. Residues 38–74 (VQHASKQISAEKQYKGIIDCVVRIPKEQGFLSFWRGN) lie on the Mitochondrial matrix side of the membrane. The residue at position 52 (Lys52) is an N6,N6,N6-trimethyllysine. Position 52 is an N6-methyllysine (Lys52). A helical transmembrane segment spans residues 75–99 (LANVIRYFPTQALNFAFKDKYKQIF). ADP-binding residues include Arg80 and Lys92. Residues 100–109 (LGGVDRHKQF) are Mitochondrial intermembrane-facing. Residues 110–130 (WRYFAGNLASGGAAGATSLCF) traverse the membrane as a helical segment. Solcar repeat units follow at residues 111–201 (RYFA…AKGM) and 212–297 (VSWM…IKKF). At 131 to 178 (VYPLDFARTRLAADVGKGAAQREFTGLGNCITKIFKSDGLRGLYQGFN) the chain is on the mitochondrial matrix side. N6-succinyllysine is present on Lys147. Cys160 bears the S-nitrosocysteine mark. Residues 179–199 (VSVQGIIIYRAAYFGVYDTAK) form a helical membrane-spanning segment. The Mitochondrial intermembrane segment spans residues 200–210 (GMLPDPKNVHI). A helical transmembrane segment spans residues 211-231 (IVSWMIAQTVTAVAGLVSYPF). Residues 232–273 (DTVRRRMMMQSGRKGADIMYTGTVDCWRKIAKDEGPKAFFKG) lie on the Mitochondrial matrix side of the membrane. Arg235 lines the ADP pocket. The important for transport activity stretch occupies residues 235 to 240 (RRRMMM). A Nucleotide carrier signature motif motif is present at residues 235 to 240 (RRRMMM). 2 positions are modified to N6-succinyllysine: Lys245 and Lys272. The helical transmembrane segment at 274 to 291 (AWSNVLRGMGGAFVLVLY) threads the bilayer. The Mitochondrial intermembrane segment spans residues 292–298 (DEIKKFV).

Belongs to the mitochondrial carrier (TC 2.A.29) family. As to quaternary structure, monomer. Found in a complex with ARL2, ARL2BP and SLC25A4/ANT1. Interacts with ARL2BP. Interacts with TIMM44; leading to inhibit the presequence translocase TIMM23, thereby promoting stabilization of PINK1. In terms of processing, under cell death induction, transglutaminated by TGM2. Transglutamination leads to formation of covalent cross-links between a glutamine and the epsilon-amino group of a lysine residue, forming polymers. As to expression, detected in heart muscle (at protein level). Detected in heart.

Its subcellular location is the mitochondrion inner membrane. It is found in the membrane. It carries out the reaction ADP(in) + ATP(out) = ADP(out) + ATP(in). The catalysed reaction is H(+)(in) = H(+)(out). Its activity is regulated as follows. The matrix-open state (m-state) is inhibited by the membrane-permeable bongkrekic acid (BKA). The cytoplasmic-open state (c-state) is inhibited by the membrane-impermeable toxic inhibitor carboxyatractyloside (CATR). Proton transporter activity is inhibited by ADP:ATP antiporter activity. Its function is as follows. ADP:ATP antiporter that mediates import of ADP into the mitochondrial matrix for ATP synthesis, and export of ATP out to fuel the cell. Cycles between the cytoplasmic-open state (c-state) and the matrix-open state (m-state): operates by the alternating access mechanism with a single substrate-binding site intermittently exposed to either the cytosolic (c-state) or matrix (m-state) side of the inner mitochondrial membrane. In addition to its ADP:ATP antiporter activity, also involved in mitochondrial uncoupling and mitochondrial permeability transition pore (mPTP) activity. Plays a role in mitochondrial uncoupling by acting as a proton transporter: proton transport uncouples the proton flows via the electron transport chain and ATP synthase to reduce the efficiency of ATP production and cause mitochondrial thermogenesis. Proton transporter activity is inhibited by ADP:ATP antiporter activity, suggesting that SLC25A4/ANT1 acts as a master regulator of mitochondrial energy output by maintaining a delicate balance between ATP production (ADP:ATP antiporter activity) and thermogenesis (proton transporter activity). Proton transporter activity requires free fatty acids as cofactor, but does not transport it. Probably mediates mitochondrial uncoupling in tissues that do not express UCP1. Also plays a key role in mPTP opening, a non-specific pore that enables free passage of the mitochondrial membranes to solutes of up to 1.5 kDa, and which contributes to cell death. It is however unclear if SLC25A4/ANT1 constitutes a pore-forming component of mPTP or regulates it. Acts as a regulator of mitophagy independently of ADP:ATP antiporter activity: promotes mitophagy via interaction with TIMM44, leading to inhibit the presequence translocase TIMM23, thereby promoting stabilization of PINK1. This is ADP/ATP translocase 1 from Bos taurus (Bovine).